A 231-amino-acid polypeptide reads, in one-letter code: Large ribosomal subunit protein uL1 (231 aa).

The protein belongs to the universal ribosomal protein uL1 family. In terms of assembly, part of the 50S ribosomal subunit.

Its function is as follows. Binds directly to 23S rRNA. The L1 stalk is quite mobile in the ribosome, and is involved in E site tRNA release. Functionally, protein L1 is also a translational repressor protein, it controls the translation of the L11 operon by binding to its mRNA. This is Large ribosomal subunit protein uL1 from Pseudomonas putida (strain ATCC 700007 / DSM 6899 / JCM 31910 / BCRC 17059 / LMG 24140 / F1).